Reading from the N-terminus, the 353-residue chain is Envelope glycoprotein M (353 aa).

Topologically, residues 1–27 (MAKAGVMTLSHVDRMNLRTWTMAIACC) are intravirion. A helical transmembrane segment spans residues 28–48 (LLSFVNIVVFSVAAHFPGIGF). At 49–82 (PCYYPRIIDFDNMNLTMYNAIHHLTPQLFLDPVQ) the chain is on the virion surface side. A helical membrane pass occupies residues 83-103 (LIVYVIFTELIFFCVLSYYIV). Over 104 to 132 (CWVQIYFRSEHGTQVNQSTRDINFMGDSA) the chain is Intravirion. A helical membrane pass occupies residues 133–153 (TCFTFVLTMDTFQIFLLSLSF). The Virion surface portion of the chain corresponds to 154–157 (RLPS). The helical transmembrane segment at 158-178 (MVAFSKCMYFMCLTAFVVTLV) threads the bilayer. Residues 179 to 210 (THYESRERSAFALSKIHPKLQGTIRYRTAVVN) are Intravirion-facing. The helical transmembrane segment at 211–231 (LTQLILGFATMVLAMSLALGF) threads the bilayer. Topologically, residues 232 to 240 (GNSFFVKTA) are virion surface. Residues 241 to 261 (HVVFGAMVAFAIVACVYFSII) form a helical membrane-spanning segment. Residues 262 to 270 (ESVLSRYMK) lie on the Intravirion side of the membrane. Residues 271–291 (VQFGYHIGTILGVCGAMYPII) traverse the membrane as a helical segment. The Virion surface segment spans residues 292 to 304 (RYEALNASSYARD). A helical transmembrane segment spans residues 305–325 (INIGITVLLLLCVAFSVIRTV). Residues 326–353 (RFLLRRNKRYRALALDNEEIRALRSDAE) are Intravirion-facing.

The protein belongs to the herpesviridae glycoprotein M family. As to quaternary structure, interacts (via N-terminus) with gN (via N-terminus). The gM-gN heterodimer forms the gCII complex.

It is found in the virion membrane. Its subcellular location is the host Golgi apparatus. It localises to the host trans-Golgi network. The protein localises to the host endosome membrane. The protein resides in the host nucleus inner membrane. Envelope glycoprotein important for virion assembly and egress. Plays a role in the correct incorporation of gH-gL into virion membrane. Directs the glycoprotein N (gN) to the host trans-Golgi network. The chain is Envelope glycoprotein M from Mus musculus (Mouse).